Consider the following 317-residue polypeptide: Beta-ketoacyl-[acyl-carrier-protein] synthase III (317 aa).

Catalysis depends on residues cysteine 112 and histidine 244. The ACP-binding stretch occupies residues glutamine 245–arginine 249. Residue asparagine 274 is part of the active site.

The protein belongs to the thiolase-like superfamily. FabH family. As to quaternary structure, homodimer.

It localises to the cytoplasm. The catalysed reaction is malonyl-[ACP] + acetyl-CoA + H(+) = 3-oxobutanoyl-[ACP] + CO2 + CoA. It participates in lipid metabolism; fatty acid biosynthesis. Functionally, catalyzes the condensation reaction of fatty acid synthesis by the addition to an acyl acceptor of two carbons from malonyl-ACP. Catalyzes the first condensation reaction which initiates fatty acid synthesis and may therefore play a role in governing the total rate of fatty acid production. Possesses both acetoacetyl-ACP synthase and acetyl transacylase activities. Its substrate specificity determines the biosynthesis of branched-chain and/or straight-chain of fatty acids. The sequence is that of Beta-ketoacyl-[acyl-carrier-protein] synthase III from Salmonella typhi.